The chain runs to 151 residues: UPF0178 protein YaiI (151 aa).

Belongs to the UPF0178 family.

The chain is UPF0178 protein YaiI from Salmonella choleraesuis (strain SC-B67).